Consider the following 331-residue polypeptide: Ketol-acid reductoisomerase (NADP(+)) (331 aa).

A KARI N-terminal Rossmann domain is found at 1 to 181 (MKVYYEKDAN…GGSRSGVIET (181 aa)). NADP(+)-binding positions include 24–27 (YGSQ), arginine 47, and 82–85 (DQVQ). Histidine 107 is a catalytic residue. Glycine 133 serves as a coordination point for NADP(+). The KARI C-terminal knotted domain occupies 182–327 (TFREETETDL…GELRGMMPWL (146 aa)). Mg(2+) contacts are provided by aspartate 190, glutamate 194, glutamate 226, and glutamate 230. Residue serine 251 coordinates substrate.

This sequence belongs to the ketol-acid reductoisomerase family. The cofactor is Mg(2+).

The catalysed reaction is (2R)-2,3-dihydroxy-3-methylbutanoate + NADP(+) = (2S)-2-acetolactate + NADPH + H(+). The enzyme catalyses (2R,3R)-2,3-dihydroxy-3-methylpentanoate + NADP(+) = (S)-2-ethyl-2-hydroxy-3-oxobutanoate + NADPH + H(+). Its pathway is amino-acid biosynthesis; L-isoleucine biosynthesis; L-isoleucine from 2-oxobutanoate: step 2/4. The protein operates within amino-acid biosynthesis; L-valine biosynthesis; L-valine from pyruvate: step 2/4. Its function is as follows. Involved in the biosynthesis of branched-chain amino acids (BCAA). Catalyzes an alkyl-migration followed by a ketol-acid reduction of (S)-2-acetolactate (S2AL) to yield (R)-2,3-dihydroxy-isovalerate. In the isomerase reaction, S2AL is rearranged via a Mg-dependent methyl migration to produce 3-hydroxy-3-methyl-2-ketobutyrate (HMKB). In the reductase reaction, this 2-ketoacid undergoes a metal-dependent reduction by NADPH to yield (R)-2,3-dihydroxy-isovalerate. This chain is Ketol-acid reductoisomerase (NADP(+)), found in Nitratidesulfovibrio vulgaris (strain ATCC 29579 / DSM 644 / CCUG 34227 / NCIMB 8303 / VKM B-1760 / Hildenborough) (Desulfovibrio vulgaris).